Here is a 119-residue protein sequence, read N- to C-terminus: Ribonuclease P protein component (119 aa).

This sequence belongs to the RnpA family. In terms of assembly, consists of a catalytic RNA component (M1 or rnpB) and a protein subunit.

It carries out the reaction Endonucleolytic cleavage of RNA, removing 5'-extranucleotides from tRNA precursor.. Its function is as follows. RNaseP catalyzes the removal of the 5'-leader sequence from pre-tRNA to produce the mature 5'-terminus. It can also cleave other RNA substrates such as 4.5S RNA. The protein component plays an auxiliary but essential role in vivo by binding to the 5'-leader sequence and broadening the substrate specificity of the ribozyme. This Histophilus somni (strain 129Pt) (Haemophilus somnus) protein is Ribonuclease P protein component.